Here is a 115-residue protein sequence, read N- to C-terminus: MKFVLLFGVFLVTLFSYSSAEMLDDFDQADEDELLSLIEKEEARAKECIPRFYDCSHDRHSCCRSELFKDVCTCFYPKGGDNEVCTCQQPKHLKYMEKAADKAKKFGGKIKKWFG.

The signal sequence occupies residues 1-20; sequence MKFVLLFGVFLVTLFSYSSA. A propeptide spanning residues 21–44 is cleaved from the precursor; that stretch reads EMLDDFDQADEDELLSLIEKEEAR. Intrachain disulfides connect cysteine 48–cysteine 63, cysteine 55–cysteine 72, cysteine 62–cysteine 87, and cysteine 74–cysteine 85.

This sequence belongs to the neurotoxin 19 (CSTX) family. 01 subfamily. Expressed by the venom gland.

The protein resides in the secreted. In Lycosa singoriensis (Wolf spider), this protein is U3-lycotoxin-Ls1i.